Consider the following 155-residue polypeptide: Endoribonuclease YbeY (155 aa).

Histidine 114, histidine 118, and histidine 124 together coordinate Zn(2+).

The protein belongs to the endoribonuclease YbeY family. The cofactor is Zn(2+).

The protein localises to the cytoplasm. Functionally, single strand-specific metallo-endoribonuclease involved in late-stage 70S ribosome quality control and in maturation of the 3' terminus of the 16S rRNA. The protein is Endoribonuclease YbeY of Escherichia coli O17:K52:H18 (strain UMN026 / ExPEC).